The primary structure comprises 190 residues: Xanthine phosphoribosyltransferase 1 (190 aa).

Xanthine is bound by residues Leu-20 and Asn-27. Residue 129–133 (AQGCA) coordinates 5-phospho-alpha-D-ribose 1-diphosphate. Residue Lys-157 coordinates xanthine.

The protein belongs to the purine/pyrimidine phosphoribosyltransferase family. Xpt subfamily. In terms of assembly, homodimer.

It is found in the cytoplasm. It carries out the reaction XMP + diphosphate = xanthine + 5-phospho-alpha-D-ribose 1-diphosphate. It participates in purine metabolism; XMP biosynthesis via salvage pathway; XMP from xanthine: step 1/1. In terms of biological role, converts the preformed base xanthine, a product of nucleic acid breakdown, to xanthosine 5'-monophosphate (XMP), so it can be reused for RNA or DNA synthesis. The polypeptide is Xanthine phosphoribosyltransferase 1 (Clostridium perfringens (strain ATCC 13124 / DSM 756 / JCM 1290 / NCIMB 6125 / NCTC 8237 / Type A)).